A 295-amino-acid polypeptide reads, in one-letter code: Origin of replication complex subunit 6 (295 aa).

Residues 212–295 (PSKRKHDDDS…MALEVSSAAN (84 aa)) are disordered. The segment covering 220–236 (DSDSSGESSGDDQDELD) has biased composition (acidic residues). Residues 254 to 263 (WKSSVLSNKQ) are compositionally biased toward polar residues.

The protein belongs to the ORC6 family. As to quaternary structure, component of the origin recognition complex (ORC) composed of at least ORC1, ORC2, ORC3, ORC4, ORC5 and ORC6. ORC is regulated in a cell-cycle and development dependent manner. It is sequentially assembled at the exit from anaphase of mitosis and disassembled as cells enter S phase.

The protein resides in the nucleus. Its function is as follows. Component of the origin recognition complex (ORC) that binds origins of replication. DNA-binding is ATP-dependent. The specific DNA sequences that define origins of replication have not been identified yet. ORC is required to assemble the pre-replication complex necessary to initiate DNA replication. The polypeptide is Origin of replication complex subunit 6 (Oryza sativa subsp. japonica (Rice)).